The primary structure comprises 145 residues: UPF0735 ACT domain-containing protein CLD_1535 (145 aa).

The ACT domain occupies 69-144; that stretch reads TIGLLLGHER…NVIKVDLIAM (76 aa).

The protein belongs to the UPF0735 family.

The chain is UPF0735 ACT domain-containing protein CLD_1535 from Clostridium botulinum (strain Okra / Type B1).